A 264-amino-acid polypeptide reads, in one-letter code: uncharacterized protein (264 aa).

This is an uncharacterized protein from Shigella flexneri.